A 109-amino-acid polypeptide reads, in one-letter code: U-scoloptoxin(16)-Ssd1a (109 aa).

Positions 1–23 are cleaved as a signal peptide; it reads MTTSATVIIMVLCVGSLVIFSEG.

In terms of processing, contains 4 disulfide bonds. In terms of tissue distribution, expressed by the venom gland.

The protein resides in the secreted. The sequence is that of U-scoloptoxin(16)-Ssd1a from Scolopendra dehaani (Thai centipede).